A 246-amino-acid polypeptide reads, in one-letter code: Small ribosomal subunit protein uS2 (246 aa).

This sequence belongs to the universal ribosomal protein uS2 family. As to quaternary structure, component of the small ribosomal subunit. Mature ribosomes consist of a small (40S) and a large (60S) subunit. The 40S subunit contains about 33 different proteins and 1 molecule of RNA (18S). The 60S subunit contains about 49 different proteins and 3 molecules of RNA (25S, 5.8S and 5S). Interacts with ribosomal protein S21.

Its subcellular location is the cytoplasm. Required for the assembly and/or stability of the 40S ribosomal subunit. Required for the processing of the 20S rRNA-precursor to mature 18S rRNA in a late step of the maturation of 40S ribosomal subunits. In Leishmania infantum, this protein is Small ribosomal subunit protein uS2.